The sequence spans 184 residues: UPF0149 protein Pmen_0324 (184 aa).

Belongs to the UPF0149 family.

This is UPF0149 protein Pmen_0324 from Ectopseudomonas mendocina (strain ymp) (Pseudomonas mendocina).